We begin with the raw amino-acid sequence, 509 residues long: Ribonuclease E/G-like protein (509 aa).

The S1 motif domain maps to 35 to 117; sequence SDIYLGCVDK…LTANITLSGR (83 aa). Asp296 and Asp339 together coordinate Mg(2+).

This sequence belongs to the RNase E/G family. The cofactor is Mg(2+).

The protein resides in the plastid. It localises to the chloroplast stroma. Involved in intercistronic processing of primary transcripts from chloroplast operons. The endonucleolytic activity of the enzyme depends on the number of phosphates at the 5' end, is inhibited by structured RNA, and preferentially cleaves A/U-rich sequences. The protein is Ribonuclease E/G-like protein (rne) of Pyropia yezoensis (Susabi-nori).